The primary structure comprises 58 residues: DNA-directed RNA polymerases I, II, and III subunit RPABC4 (58 aa).

4 residues coordinate Zn(2+): Cys-19, Cys-22, Cys-36, and Cys-39. The C4-type zinc finger occupies 19–39 (CGECHTENEIKSRDPIRCREC).

It belongs to the archaeal Rpo12/eukaryotic RPC10 RNA polymerase subunit family. As to quaternary structure, component of the RNA polymerase I (Pol I), RNA polymerase II (Pol II) and RNA polymerase III (Pol III) complexes consisting of at least 13, 12 and 17 subunits, respectively. Pol I complex consists of a ten-subunit catalytic core composed of POLR1A/RPA1, POLR1B/RPA2, POLR1C/RPAC1, POLR1D/RPAC2, POLR1H/RPA12, POLR2E/RPABC1, POLR2F/RPABC2, POLR2H/RPABC3, POLR2K/RPABC4 and POLR2L/RPABC5; a mobile stalk subunit POLR1F/RPA43 protruding from the core and additional subunits homologous to general transcription factors POLR1E/RPA49 and POLR1G/RPA34. Part of Pol I pre-initiation complex (PIC), in which Pol I core assembles with RRN3 and promoter-bound UTBF and SL1/TIF-IB complex. Pol II complex contains a ten-subunit catalytic core composed of POLR2A/RPB1, POLR2B/RPB2, POLR2C/RPB3, POLR2I/RPB9, POLR2J/RPB11, POLR2E/RPABC1, POLR2F/RPABC2, POLR2H/RPABC3, POLR2K/RPABC4 and POLR2L/RPABC5 and a mobile stalk composed of two subunits POLR2D/RPB4 and POLR2G/RPB7. Part of Pol II(G) complex, in which Pol II core associates with an additional subunit POLR2M; unlike conventional Pol II, Pol II(G) functions as a transcriptional repressor. Part of TBP-based Pol II pre-initiation complex (PIC), in which Pol II core assembles with general transcription factors and other specific initiation factors including GTF2E1, GTF2E2, GTF2F1, GTF2F2, TCEA1, ERCC2, ERCC3, GTF2H2, GTF2H3, GTF2H4, GTF2H5, GTF2A1, GTF2A2, GTF2B and TBP; this large multi-subunit PIC complex mediates DNA unwinding and targets Pol II core to the transcription start site where the first phosphodiester bond forms. Pol III complex consists of a ten-subunit catalytic core composed of POLR3A/RPC1, POLR3B/RPC2, POLR1C/RPAC1, POLR1D/RPAC2, POLR3K/RPC10, POLR2E/RPABC1, POLR2F/RPABC2, POLR2H/RPABC3, POLR2K/RPABC4 and POLR2L/RPABC5; a mobile stalk composed of two subunits POLR3H/RPC8 and CRCP/RPC9, protruding from the core and functioning primarily in transcription initiation; and additional subunits homologous to general transcription factors of the RNA polymerase II machinery, POLR3C/RPC3-POLR3F/RPC6-POLR3G/RPC7 heterotrimer required for transcription initiation and POLR3D/RPC4-POLR3E/RPC5 heterodimer involved in both transcription initiation and termination.

It localises to the nucleus. Its subcellular location is the nucleolus. Functionally, DNA-dependent RNA polymerase catalyzes the transcription of DNA into RNA using the four ribonucleoside triphosphates as substrates. Common component of RNA polymerases I, II and III which synthesize ribosomal RNA precursors, mRNA precursors and many functional non-coding RNAs, and a small RNAs, such as 5S rRNA and tRNAs, respectively. This Mus musculus (Mouse) protein is DNA-directed RNA polymerases I, II, and III subunit RPABC4 (Polr2k).